Reading from the N-terminus, the 315-residue chain is MGQKVNPHGFRLGITSEFTSRWYADKQYKAYVGEDVKIRKMMSRGMERAGISRVDIERTQGRLRVDIHTARPGIVIGRRGAEADRIRGDLEKLTGKQVQLNILEVKNPEVDAQLVAQGVAEQLSSRVSFRRAMRKAMQTAMKGGAKGIRVQCSGRLGGAEMSRSEFYREGRVPLHTLRADIDYGFYEARTNFGRIGVKVWIYKGDIVQSRAEREAQEALQRQTRRERPRRGPRSGSSGTTQGGTEAGRAAARGERRGRGGGGGNAPAETPAGEAAATEPTAPVAEPATAAASAPAEAASAPAEAAVANTPEKAEE.

The region spanning 38–106 (IRKMMSRGME…QVQLNILEVK (69 aa)) is the KH type-2 domain. The disordered stretch occupies residues 211–315 (AEREAQEALQ…VANTPEKAEE (105 aa)). Over residues 222-232 (QTRRERPRRGP) the composition is skewed to basic residues. The segment covering 265 to 315 (APAETPAGEAAATEPTAPVAEPATAAASAPAEAASAPAEAAVANTPEKAEE) has biased composition (low complexity).

Belongs to the universal ribosomal protein uS3 family. Part of the 30S ribosomal subunit. Forms a tight complex with proteins S10 and S14.

Binds the lower part of the 30S subunit head. Binds mRNA in the 70S ribosome, positioning it for translation. The polypeptide is Small ribosomal subunit protein uS3 (Frankia casuarinae (strain DSM 45818 / CECT 9043 / HFP020203 / CcI3)).